We begin with the raw amino-acid sequence, 445 residues long: C4-dicarboxylate transport protein 2 (445 aa).

A run of 8 helical transmembrane segments spans residues 24 to 44 (ILYV…WLFP), 62 to 82 (LIKM…IAHI), 96 to 116 (LVYF…VGNL), 163 to 183 (GDIL…MALG), 201 to 221 (FGVI…AMAF), 237 to 257 (LIAL…GLIA), 334 to 354 (ALGV…AMLT), and 366 to 386 (FITL…GMAI).

It belongs to the dicarboxylate/amino acid:cation symporter (DAACS) (TC 2.A.23) family.

It localises to the cell inner membrane. Its function is as follows. Responsible for the transport of dicarboxylates such as succinate, fumarate, and malate from the periplasm across the membrane. This is C4-dicarboxylate transport protein 2 from Bradyrhizobium sp. (strain ORS 278).